The following is a 942-amino-acid chain: DNA polymerase I (942 aa).

Residues 177–269 form the 5'-3' exonuclease domain; it reads EPDQLADLRG…LEAARIGVYD (93 aa). The region spanning 340–522 is the 3'-5' exonuclease domain; it reads TIVRDATALA…LTERLQRQLE (183 aa).

The protein belongs to the DNA polymerase type-A family. In terms of assembly, single-chain monomer with multiple functions.

It carries out the reaction DNA(n) + a 2'-deoxyribonucleoside 5'-triphosphate = DNA(n+1) + diphosphate. In terms of biological role, in addition to polymerase activity, this DNA polymerase exhibits 3'-5' and 5'-3' exonuclease activity. The polypeptide is DNA polymerase I (polA) (Chloroflexus aurantiacus (strain ATCC 29366 / DSM 635 / J-10-fl)).